The chain runs to 475 residues: Ribulose bisphosphate carboxylase large chain (475 aa).

The propeptide occupies 1 to 2 (MS). Position 3 is an N-acetylproline (Pro-3). Position 14 is an N6,N6,N6-trimethyllysine (Lys-14). Positions 123 and 173 each coordinate substrate. The active-site Proton acceptor is Lys-175. Lys-177 lines the substrate pocket. Mg(2+)-binding residues include Lys-201, Asp-203, and Glu-204. Position 201 is an N6-carboxylysine (Lys-201). Catalysis depends on His-294, which acts as the Proton acceptor. Substrate contacts are provided by Arg-295, His-327, and Ser-379.

This sequence belongs to the RuBisCO large chain family. Type I subfamily. Heterohexadecamer of 8 large chains and 8 small chains; disulfide-linked. The disulfide link is formed within the large subunit homodimers. Requires Mg(2+) as cofactor. In terms of processing, the disulfide bond which can form in the large chain dimeric partners within the hexadecamer appears to be associated with oxidative stress and protein turnover.

It is found in the plastid. The protein resides in the chloroplast. It catalyses the reaction 2 (2R)-3-phosphoglycerate + 2 H(+) = D-ribulose 1,5-bisphosphate + CO2 + H2O. The enzyme catalyses D-ribulose 1,5-bisphosphate + O2 = 2-phosphoglycolate + (2R)-3-phosphoglycerate + 2 H(+). Its function is as follows. RuBisCO catalyzes two reactions: the carboxylation of D-ribulose 1,5-bisphosphate, the primary event in carbon dioxide fixation, as well as the oxidative fragmentation of the pentose substrate in the photorespiration process. Both reactions occur simultaneously and in competition at the same active site. The chain is Ribulose bisphosphate carboxylase large chain from Cryptomeria japonica (Japanese cedar).